The sequence spans 389 residues: Probable dual-specificity RNA methyltransferase RlmN (389 aa).

A disordered region spans residues 1 to 23 (MTTQHPDTPETGITPGGTSGAFR). The Proton acceptor role is filled by glutamate 127. Residues 133–376 (YPTRTTLCIS…ATLRDTRGQD (244 aa)) form the Radical SAM core domain. Cysteine 140 and cysteine 381 form a disulfide bridge. Residues cysteine 147, cysteine 151, and cysteine 154 each coordinate [4Fe-4S] cluster. S-adenosyl-L-methionine contacts are provided by residues 202–203 (GE), serine 236, 259–261 (SLH), and asparagine 338. Cysteine 381 serves as the catalytic S-methylcysteine intermediate.

The protein belongs to the radical SAM superfamily. RlmN family. Requires [4Fe-4S] cluster as cofactor.

The protein resides in the cytoplasm. It catalyses the reaction adenosine(2503) in 23S rRNA + 2 reduced [2Fe-2S]-[ferredoxin] + 2 S-adenosyl-L-methionine = 2-methyladenosine(2503) in 23S rRNA + 5'-deoxyadenosine + L-methionine + 2 oxidized [2Fe-2S]-[ferredoxin] + S-adenosyl-L-homocysteine. It carries out the reaction adenosine(37) in tRNA + 2 reduced [2Fe-2S]-[ferredoxin] + 2 S-adenosyl-L-methionine = 2-methyladenosine(37) in tRNA + 5'-deoxyadenosine + L-methionine + 2 oxidized [2Fe-2S]-[ferredoxin] + S-adenosyl-L-homocysteine. Functionally, specifically methylates position 2 of adenine 2503 in 23S rRNA and position 2 of adenine 37 in tRNAs. The sequence is that of Probable dual-specificity RNA methyltransferase RlmN from Bifidobacterium longum (strain NCC 2705).